The following is a 445-amino-acid chain: MRSIQRRLSVGLFAVLLVVGLVLAQTGLWLFDQGLRRYFAGNLREEAENLLVAMVRGPNGMQLDEQRLNPAFQRPYSGRYFVIELEKDTWRSRSLWDSELEVPHKKGLVQGLVDGPEEQRLLVFRGHYKRMGQKLRIVVAQDYTPILESFARVQWMGLGAGALALLLVLLLQRLTVRRSLRPLEEVRLQIAQLQQGQRSQLDNQAPEELEPLVEQINHLLAHTEETLKRSRNALGNLGHALKTPLAVLVSLAEREEMARQPELQQVLREQLEQIQQRLGRELGKARLVGEALPGAHFDCAEELPSLCDTLRLIHGPHLQVSWSAPPGLRLPWDREDLLEMLGNLLDNACKWADSEVRLTVAQGEGMVRLKVDDDGPGILPDQRQAVLERGTRLDEQVSGHGLGLGIARDIAEACGGRLSLEDSPLGGLRVSVELPLQKSGRAARA.

The first 24 residues, 1-24, serve as a signal peptide directing secretion; that stretch reads MRSIQRRLSVGLFAVLLVVGLVLA. The chain crosses the membrane as a helical span at residues 150–170; sequence FARVQWMGLGAGALALLLVLL. In terms of domain architecture, HAMP spans 177–228; it reads RRSLRPLEEVRLQIAQLQQGQRSQLDNQAPEELEPLVEQINHLLAHTEETLK. Residues 236 to 438 enclose the Histidine kinase domain; the sequence is NLGHALKTPL…RVSVELPLQK (203 aa). A Phosphohistidine; by autocatalysis modification is found at His239.

It localises to the membrane. The catalysed reaction is ATP + protein L-histidine = ADP + protein N-phospho-L-histidine.. Functionally, member of the two-component regulatory system CarS/CarR that regulates the expression of multiple genes involved in calcium signaling and homeostasis including CarO and CarP. May function as a membrane-associated protein kinase that phosphorylates CarR in response to environmental signals leading to activation of specific gene promoters. The protein is Sensor protein kinase CarS (carS) of Pseudomonas aeruginosa (strain ATCC 15692 / DSM 22644 / CIP 104116 / JCM 14847 / LMG 12228 / 1C / PRS 101 / PAO1).